A 413-amino-acid polypeptide reads, in one-letter code: Gamma-glutamyl phosphate reductase (413 aa).

This sequence belongs to the gamma-glutamyl phosphate reductase family.

Its subcellular location is the cytoplasm. It carries out the reaction L-glutamate 5-semialdehyde + phosphate + NADP(+) = L-glutamyl 5-phosphate + NADPH + H(+). Its pathway is amino-acid biosynthesis; L-proline biosynthesis; L-glutamate 5-semialdehyde from L-glutamate: step 2/2. Functionally, catalyzes the NADPH-dependent reduction of L-glutamate 5-phosphate into L-glutamate 5-semialdehyde and phosphate. The product spontaneously undergoes cyclization to form 1-pyrroline-5-carboxylate. The sequence is that of Gamma-glutamyl phosphate reductase from Geobacillus sp. (strain WCH70).